The chain runs to 202 residues: Protein GrpE (202 aa).

Positions M1 to T14 are enriched in polar residues. The interval M1–L58 is disordered. A compositionally biased stretch (low complexity) spans R21–L58.

The protein belongs to the GrpE family. Homodimer.

Its subcellular location is the cytoplasm. Its function is as follows. Participates actively in the response to hyperosmotic and heat shock by preventing the aggregation of stress-denatured proteins, in association with DnaK and GrpE. It is the nucleotide exchange factor for DnaK and may function as a thermosensor. Unfolded proteins bind initially to DnaJ; upon interaction with the DnaJ-bound protein, DnaK hydrolyzes its bound ATP, resulting in the formation of a stable complex. GrpE releases ADP from DnaK; ATP binding to DnaK triggers the release of the substrate protein, thus completing the reaction cycle. Several rounds of ATP-dependent interactions between DnaJ, DnaK and GrpE are required for fully efficient folding. The sequence is that of Protein GrpE from Paraburkholderia phymatum (strain DSM 17167 / CIP 108236 / LMG 21445 / STM815) (Burkholderia phymatum).